The following is a 591-amino-acid chain: Paxillin (591 aa).

Methionine 1 carries the N-acetylmethionine modification. Positions 3–15 match the LD motif 1 motif; sequence DLDALLADLESTT. Positions 17–139 are disordered; the sequence is HISKRPVFLS…SPTVMSSSLG (123 aa). Phosphotyrosine; by PTK6 is present on tyrosine 31. Pro residues predominate over residues 45–54; that stretch reads VPPPVPPPPS. Serine 83 bears the Phosphoserine mark. Residue tyrosine 88 is modified to Phosphotyrosine. The span at 89 to 99 shows a compositional bias: low complexity; the sequence is SSSAKNSSASN. The residue at position 106 (serine 106) is a Phosphoserine. Tyrosine 118 carries the phosphotyrosine; by PTK6 modification. Phosphoserine occurs at positions 119, 126, and 130. Positions 121-137 are enriched in polar residues; it reads PNKQKSAEPSPTVMSSS. Position 132 is a phosphothreonine (threonine 132). Serine 137, serine 140, and serine 143 each carry phosphoserine. The LD motif 2 signature appears at 144 to 156; the sequence is ELDRLLLELNAVQ. A disordered region spans residues 156 to 261; it reads QHSPPGFPAD…QQQTRISASS (106 aa). Tyrosine 181 carries the phosphotyrosine modification. Residues 216-228 carry the LD motif 3 motif; the sequence is SVESLLDELESSV. Residue serine 230 is modified to Phosphoserine. The span at 236–261 shows a compositional bias: polar residues; that stretch reads TVNQGEMSSPQRVTSSQQQTRISASS. Serine 244 is subject to Phosphoserine; by CDK5. Phosphoserine is present on residues serine 250, serine 258, serine 261, serine 272, serine 303, serine 322, serine 332, and serine 340. The segment at 262-315 is required for binding to PARVA and ILK; that stretch reads ATRELDELMASLSDFKMQGLEQRVDGERPWAAGWPPSSRQSSPEGQDEGGFMAQ. An LD motif 4 motif is present at residues 265-276; it reads ELDELMASLSDF. The segment at 289-338 is disordered; it reads RPWAAGWPPSSRQSSPEGQDEGGFMAQGKTGSSSPPGGLSKPGSQLDSML. A compositionally biased stretch (low complexity) spans 315 to 334; sequence QGKTGSSSPPGGLSKPGSQL. The LD motif 5 signature appears at 333–345; it reads QLDSMLGSLQSDL. 4 consecutive LIM zinc-binding domains span residues 356-415, 416-473, 474-533, and 534-591; these read GVCG…LFSP, RCYY…DMFA, PKCG…RRGS, and LCSG…KLFC. Serine 533 is subject to Phosphoserine.

Belongs to the paxillin family. Interacts in vitro with VCL/vinculin as well as to the SH3 domain of SRC and, when tyrosine phosphorylated, to the SH2 domain of CRK. Interacts with GIT1. Interacts with NUDT16L1/SDOS. Interacts with PTK2/FAK1. Interacts with PTK2B/PYK2. Interacts with ASAP2. Interacts with unphosphorylated ITGA4. Interacts with RNF5. Interacts with PDCD10. Interacts with NEK3, the interaction is prolactin-dependent. Interacts with PTK6. Interacts with TGFB1I1. Interacts with SORBS1. Interacts with PARVB. Interacts (via LD motif 4) with PARVA/PARVIN. Interacts (via LD motif 4) with ILK. Interacts (via cytoplasmic domain) with CEACAM1; the interaction is phosphotyrosyl-dependent. Interacts with LIMA1; this complex stabilizes actin dynamics. Interacts with CD36 (via C-terminus). Interacts with TRIM15. Interacts with PAK4; PAK4 acts as a scaffold to suppport PAXI phosphorylation at Ser-272. Post-translationally, phosphorylated by MAPK1/ERK2. Phosphorylated on tyrosine residues during integrin-mediated cell adhesion, embryonic development, fibroblast transformation and following stimulation of cells by mitogens. Phosphorylation at Ser-244 by CDK5 reduces its interaction with PTK2/FAK1 in matrix-cell focal adhesions (MCFA) during oligodendrocytes (OLs) differentiation. Phosphorylation at Tyr-31 and Tyr-118 by PTK6 promote the activation of RAC1 via CRK/CrKII, thereby promoting migration and invasion. Phosphorylation at Ser-250 by SLK is required for PXN redistribution and cell motility. Phosphorylation at Ser-272 promotes focal adhesion disassembly during cell migration.

It localises to the cytoplasm. It is found in the cytoskeleton. Its subcellular location is the cell junction. The protein localises to the focal adhesion. The protein resides in the cell cortex. In terms of biological role, cytoskeletal protein involved in actin-membrane attachment at sites of cell adhesion to the extracellular matrix (focal adhesion). Recruits other proteins such as TRIM15 to focal adhesion. In Mus musculus (Mouse), this protein is Paxillin.